Here is a 160-residue protein sequence, read N- to C-terminus: Putative lipoprotein YfiB (160 aa).

An N-terminal signal peptide occupies residues 1–18; it reads MIKHLVAPLVFTSLILTG. Cysteine 19 is lipidated: N-palmitoyl cysteine. Cysteine 19 carries S-diacylglycerol cysteine lipidation. The OmpA-like domain maps to 43 to 160; the sequence is AGDWSLGLSD…RRVAVVITTP (118 aa).

It belongs to the outer membrane OOP (TC 1.B.6) superfamily.

The protein resides in the cell membrane. The polypeptide is Putative lipoprotein YfiB (yfiB) (Escherichia coli (strain K12)).